The following is a 582-amino-acid chain: MDFEDDYTHSACRNTYQGFNGMDRDYGPGSYGGMDRDYGHGSYGGQRSMDSYLNQSYGMDNHSGGGGGSRFGPYESYDSRSSLGGRDLYRSGYGFNEPEQSRFGGSYGGRFESSYRNSLDSFGGRNQGGSSWEAPYSRSKLRPGFMEDRGRENYSSYSSFSSPHMKPAPVGSRGRGTPAYPESTFGSRNYDAFGGPSTGRGRGRGHMGDFGSIHRPGIVVDYQNKSTNVTVAAARGIKRKMMQPFNKPSGTFIKKPKLAKPMEKISLSKSPTKTDPKNEEEEKRRIEARREKQRRRREKNSEKYGDGYRMAFTCSFCKFRTFEEKDIELHLESSSHQETLDHIQKQTKFDKVVMEFLHECMVNKFKKTSIRKQQTNNQTEVVKIIEKDVMEGVTVDDHMMKVETVHCSACSVYIPALHSSVQQHLKSPDHIKGKQAYKEQIKRESVLTATSILNNPIVKARYERFVKGENPFEIQDHSQDQQIEGDEEDEEKIDEPIEEEEDEDEEEEAEEVGEVEEVEEVEEVREGGIEGEGNIQGVGEGGEVGVVGEVEGVGEVEEVEELEEETAKEEPADFPVEQPEEN.

The segment at Met-1–Gly-124 is mediates transcriptional activation. Phosphoserine is present on residues Ser-48, Ser-56, Ser-63, Ser-69, Ser-81, Ser-82, Ser-91, Ser-106, Ser-114, Ser-118, Ser-121, and Ser-137. Lys-140 is covalently cross-linked (Glycyl lysine isopeptide (Lys-Gly) (interchain with G-Cter in SUMO2)). The interval Tyr-154–Gly-194 is disordered. Position 173 is an omega-N-methylarginine (Arg-173). Residue Ser-212 is modified to Phosphoserine. The residue at position 235 (Arg-235) is an Omega-N-methylarginine. The short motif at Lys-238–Lys-260 is the Bipartite nuclear localization signal element. A Glycyl lysine isopeptide (Lys-Gly) (interchain with G-Cter in SUMO2) cross-link involves residue Lys-240. Residues Gln-243–Glu-302 are disordered. Residue Lys-247 is modified to N6-acetyllysine; alternate. Residue Lys-247 forms a Glycyl lysine isopeptide (Lys-Gly) (interchain with G-Cter in SUMO2); alternate linkage. Ser-249 bears the Phosphoserine mark. A Phosphothreonine modification is found at Thr-251. Glycyl lysine isopeptide (Lys-Gly) (interchain with G-Cter in SUMO2) cross-links involve residues Lys-254 and Lys-264. Phosphoserine is present on Ser-270. Basic and acidic residues predominate over residues Thr-272 to Arg-290. A C2H2 AKAP95-type 1 zinc finger spans residues Cys-314–His-336. Lys-401 participates in a covalent cross-link: Glycyl lysine isopeptide (Lys-Gly) (interchain with G-Cter in SUMO2). The C2H2 AKAP95-type 2 zinc finger occupies Cys-407–His-430. Residues Lys-459 and Lys-467 each participate in a glycyl lysine isopeptide (Lys-Gly) (interchain with G-Cter in SUMO2) cross-link. Residues Phe-472–Asn-582 are disordered. Positions Ile-483 to Glu-523 are enriched in acidic residues. Gly residues predominate over residues Glu-530–Gly-545. Over residues Gly-552–Ala-567 the composition is skewed to acidic residues.

It belongs to the AKAP95 family. In terms of assembly, component of the DBIRD complex. Interacts with CCAR2; the interaction is direct.

It localises to the nucleus matrix. Core component of the DBIRD complex, a multiprotein complex that acts at the interface between core mRNP particles and RNA polymerase II (RNAPII) and integrates transcript elongation with the regulation of alternative splicing: the DBIRD complex affects local transcript elongation rates and alternative splicing of a large set of exons embedded in (A + T)-rich DNA regions. May play a role in neuronal differentiation and is able to bind DNA and activate expression in vitro. The sequence is that of DBIRD complex subunit ZNF326 (ZNF326) from Homo sapiens (Human).